The following is a 577-amino-acid chain: MSSTPTAEELALQNTVSQSASAHPELYHTVSHASNNSYQLPQLSRSATSNFSTSARFAARYPTTAGESFQNLTPVNSNPSNQNSKTEPNPDDVEKCIQDPLLQVFPVVEEPERFVFSIDPKSPLIAVNWPFKRKLKTTCILAYVALCSSFASSVFAVPAEAITTVFHISLTVSLLTMTVFLLGYCSGPIIWAPLSELSGRKPPILIGMLGFGIFNISVAVGKDIQTIMMCRFFAGFFASAPLTVVAAALADMYSNKYRGTAITLFSAMVFDGPLVSPIVGGFLTKSYLGWRWTEYITSFMGFFALIIVYLFCDETYSKAIIQGKAKEYRAITGNYFVHAKSEEEVLTLSDIAKNYLLVPMKLLFTEPICFLITLYSSFVYAILYLLLEAYPIIFGEKRHFSMGVAELPYIGLLVGVFIGSGINIAFEPWYYRKCLAQGGKPDPEARLPPMMIGCFMFPAGIFWLSWSGHYSYVNWVVPALSGLATGCGILLIFLQCINYLIDAYLFRAASAIAANTIMRSAMAAGFPLFAVQMFHNMGVGWAGSLLGFIATALIPMPFVFFFFGRKIRRMSKMAVDF.

Polar residues-rich tracts occupy residues 1–21 and 68–87; these read MSST…QSAS and SFQN…SKTE. Disordered stretches follow at residues 1–24 and 68–93; these read MSST…SAHP and SFQN…PDDV. Transmembrane regions (helical) follow at residues 139–159, 174–194, 204–224, 232–252, 262–282, 292–312, 367–387, 402–422, 447–467, 473–493, 504–526, and 543–563; these read CILA…AVPA, LLTM…WAPL, ILIG…GKDI, FFAG…LADM, ITLF…VGGF, WTEY…YLFC, PICF…YLLL, MGVA…GSGI, LPPM…LSWS, VNWV…LLIF, YLFR…AAGF, and GSLL…FFFF.

Belongs to the major facilitator superfamily. CAR1 family.

The protein localises to the endoplasmic reticulum. Its subcellular location is the membrane. This is an uncharacterized protein from Schizosaccharomyces pombe (strain 972 / ATCC 24843) (Fission yeast).